Reading from the N-terminus, the 108-residue chain is PTS system fructose-like EIIB component 1 (108 aa).

The PTS EIIB type-2 domain occupies 1-104 (MSKKLIALCA…IIKEIEEMIA (104 aa)). Residue Cys11 is the Phosphocysteine intermediate of the active site. A Phosphocysteine; by EIIA modification is found at Cys11.

The protein resides in the cytoplasm. It catalyses the reaction D-fructose(out) + N(pros)-phospho-L-histidyl-[protein] = D-fructose 1-phosphate(in) + L-histidyl-[protein]. The phosphoenolpyruvate-dependent sugar phosphotransferase system (sugar PTS), a major carbohydrate active transport system, catalyzes the phosphorylation of incoming sugar substrates concomitantly with their translocation across the cell membrane. The enzyme II FryABC PTS system is involved in fructose transport. The sequence is that of PTS system fructose-like EIIB component 1 (fryB) from Escherichia coli O157:H7.